The chain runs to 623 residues: Leucine aminopeptidase 2 (623 aa).

Residues 136-138 (QCE) and 261-266 (PYGGME) each bind a peptide. Histidine 290 is a binding site for Zn(2+). The Proton acceptor role is filled by glutamate 291. Zn(2+) is bound by residues histidine 294 and glutamate 313. Catalysis depends on tyrosine 391, which acts as the Proton donor.

Belongs to the peptidase M1 family. Zn(2+) is required as a cofactor.

It localises to the cytoplasm. Its subcellular location is the nucleus. It catalyses the reaction an epoxide + H2O = an ethanediol. In terms of biological role, aminopeptidase that preferentially cleaves di- and tripeptides. Also has low epoxide hydrolase activity (in vitro). Can hydrolyze the epoxide leukotriene LTA(4) but it forms preferentially 5,6-dihydroxy-7,9,11,14-eicosatetraenoic acid rather than the cytokine leukotriene B(4) as the product compared to the homologous mammalian enzyme (in vitro). In Candida albicans (strain SC5314 / ATCC MYA-2876) (Yeast), this protein is Leucine aminopeptidase 2 (LKH1).